The chain runs to 675 residues: Rho guanine nucleotide exchange factor 37 (675 aa).

A disordered region spans residues 1–26 (MAKHGADEPSSRSGSPDREGRASEDR). Positions 30–213 (HQRLAVRELI…QDVNTNINEY (184 aa)) constitute a DH domain. The BAR domain maps to 254-455 (LKQEAGLIPR…LPHHHVPEPA (202 aa)). 2 SH3 domains span residues 506-569 (GPGK…LYHV) and 602-665 (PTMN…RARS).

May act as a guanine nucleotide exchange factor (GEF). The chain is Rho guanine nucleotide exchange factor 37 (ARHGEF37) from Homo sapiens (Human).